The chain runs to 419 residues: Napsin-A (419 aa).

The first 16 residues, 1 to 16 (MSPLLLLLLCLLLGNL), serve as a signal peptide directing secretion. Residues 73 to 394 (YFGTIGLGTP…KNVGPRVGLA (322 aa)) enclose the Peptidase A1 domain. Asparagine 85 carries N-linked (GlcNAc...) asparagine glycosylation. Aspartate 91 is a catalytic residue. A disulfide bond links cysteine 104 and cysteine 111. N-linked (GlcNAc...) asparagine glycans are attached at residues asparagine 128 and asparagine 149. A disulfide bridge links cysteine 269 with cysteine 273. Aspartate 278 is an active-site residue. Cysteines 312 and 349 form a disulfide. N-linked (GlcNAc...) asparagine glycosylation occurs at asparagine 331. The interval 391-419 (VGLARAQSRSTDRAERRTTQAQFFKRRPG) is disordered.

Belongs to the peptidase A1 family. As to expression, expressed at the highest levels in the kidney, at a moderate level in the lung, and at low levels in the spleen and adipose tissue.

The protein resides in the secreted. In terms of biological role, may be involved in processing of pneumocyte surfactant precursors. The polypeptide is Napsin-A (Napsa) (Mus musculus (Mouse)).